Here is a 136-residue protein sequence, read N- to C-terminus: Large ribosomal subunit protein uL16 (136 aa).

Belongs to the universal ribosomal protein uL16 family. In terms of assembly, part of the 50S ribosomal subunit.

Its function is as follows. Binds 23S rRNA and is also seen to make contacts with the A and possibly P site tRNAs. The polypeptide is Large ribosomal subunit protein uL16 (Rickettsia typhi (strain ATCC VR-144 / Wilmington)).